Consider the following 248-residue polypeptide: Pyridoxine 5'-phosphate synthase (248 aa).

Residue asparagine 12 coordinates 3-amino-2-oxopropyl phosphate. 14–15 (DH) lines the 1-deoxy-D-xylulose 5-phosphate pocket. Position 23 (arginine 23) interacts with 3-amino-2-oxopropyl phosphate. Histidine 48 (proton acceptor) is an active-site residue. 1-deoxy-D-xylulose 5-phosphate is bound by residues arginine 50 and histidine 55. The active-site Proton acceptor is glutamate 75. Threonine 105 is a 1-deoxy-D-xylulose 5-phosphate binding site. The active-site Proton donor is the histidine 196. Residues glycine 197 and 218 to 219 (GH) contribute to the 3-amino-2-oxopropyl phosphate site.

This sequence belongs to the PNP synthase family. Homooctamer; tetramer of dimers.

It localises to the cytoplasm. The catalysed reaction is 3-amino-2-oxopropyl phosphate + 1-deoxy-D-xylulose 5-phosphate = pyridoxine 5'-phosphate + phosphate + 2 H2O + H(+). It participates in cofactor biosynthesis; pyridoxine 5'-phosphate biosynthesis; pyridoxine 5'-phosphate from D-erythrose 4-phosphate: step 5/5. Functionally, catalyzes the complicated ring closure reaction between the two acyclic compounds 1-deoxy-D-xylulose-5-phosphate (DXP) and 3-amino-2-oxopropyl phosphate (1-amino-acetone-3-phosphate or AAP) to form pyridoxine 5'-phosphate (PNP) and inorganic phosphate. The protein is Pyridoxine 5'-phosphate synthase of Pseudomonas paraeruginosa (strain DSM 24068 / PA7) (Pseudomonas aeruginosa (strain PA7)).